A 303-amino-acid chain; its full sequence is Esterase (303 aa).

The short motif at 79–81 (HGG) is the Involved in the stabilization of the negatively charged intermediate by the formation of the oxyanion hole element. Active-site residues include Ser149 and Glu244.

This sequence belongs to the 'GDXG' lipolytic enzyme family.

It is found in the secreted. The polypeptide is Esterase (est) (Acinetobacter venetianus (strain ATCC 31012 / DSM 23050 / BCRC 14357 / CCUG 45561 / CIP 110063 / KCTC 2702 / LMG 19082 / RAG-1)).